A 490-amino-acid chain; its full sequence is Betaine aldehyde dehydrogenase (490 aa).

Residue D93 coordinates K(+). NAD(+) is bound at residue 150–152; the sequence is GAW. K162 (charge relay system) is an active-site residue. Residue 176 to 179 coordinates NAD(+); sequence KPSE. Residue V180 participates in K(+) binding. 230 to 233 contributes to the NAD(+) binding site; sequence GIAS. L246 is a K(+) binding site. The active-site Proton acceptor is E252. G254, C286, and E387 together coordinate NAD(+). The active-site Nucleophile is the C286. C286 bears the Cysteine sulfenic acid (-SOH) mark. K(+) contacts are provided by K457 and G460. Catalysis depends on E464, which acts as the Charge relay system.

The protein belongs to the aldehyde dehydrogenase family. Dimer of dimers. K(+) serves as cofactor.

It carries out the reaction betaine aldehyde + NAD(+) + H2O = glycine betaine + NADH + 2 H(+). Its pathway is amine and polyamine biosynthesis; betaine biosynthesis via choline pathway; betaine from betaine aldehyde: step 1/1. In terms of biological role, involved in the biosynthesis of the osmoprotectant glycine betaine. Catalyzes the irreversible oxidation of betaine aldehyde to the corresponding acid. In Yersinia pseudotuberculosis serotype O:1b (strain IP 31758), this protein is Betaine aldehyde dehydrogenase.